Reading from the N-terminus, the 300-residue chain is Cation-efflux pump FieF (300 aa).

The helical transmembrane segment at 24–44 (LLIKIFAWWYTGSVSILAALV) threads the bilayer. Zn(2+)-binding residues include Asp45 and Asp49. Helical transmembrane passes span 82 to 102 (AALA…LTSI) and 114 to 134 (PGVG…LVTF). 2 residues coordinate Zn(2+): His153 and Asp157. The next 2 helical transmembrane spans lie at 156–176 (SDVM…YGWH) and 178–198 (ADAL…LRMG).

It belongs to the cation diffusion facilitator (CDF) transporter (TC 2.A.4) family. FieF subfamily. As to quaternary structure, homodimer.

The protein localises to the cell inner membrane. It catalyses the reaction Zn(2+)(in) + H(+)(out) = Zn(2+)(out) + H(+)(in). The enzyme catalyses Cd(2+)(in) + H(+)(out) = Cd(2+)(out) + H(+)(in). The catalysed reaction is Fe(2+)(in) + H(+)(out) = Fe(2+)(out) + H(+)(in). Its function is as follows. Divalent metal cation transporter which exports Zn(2+), Cd(2+) and possibly Fe(2+). May be involved in zinc and iron detoxification by efflux. The sequence is that of Cation-efflux pump FieF from Salmonella enteritidis PT4 (strain P125109).